We begin with the raw amino-acid sequence, 430 residues long: Cysteate synthase (430 aa).

K106 is subject to N6-(pyridoxal phosphate)lysine. The pyridoxal 5'-phosphate site is built by N132 and T381.

This sequence belongs to the threonine synthase family. Cysteate synthase subfamily. As to quaternary structure, homotrimer. The cofactor is pyridoxal 5'-phosphate.

It carries out the reaction O-phospho-L-serine + sulfite + H(+) = L-cysteate + phosphate. It functions in the pathway cofactor biosynthesis; coenzyme M biosynthesis. In terms of biological role, specifically catalyzes the beta-elimination of phosphate from L-phosphoserine and the beta-addition of sulfite to the dehydroalanine intermediate to produce L-cysteate. The protein is Cysteate synthase of Methanoculleus marisnigri (strain ATCC 35101 / DSM 1498 / JR1).